Consider the following 142-residue polypeptide: 3-hydroxyacyl-[acyl-carrier-protein] dehydratase FabZ (142 aa).

His50 is an active-site residue.

It belongs to the thioester dehydratase family. FabZ subfamily.

The protein resides in the cytoplasm. The enzyme catalyses a (3R)-hydroxyacyl-[ACP] = a (2E)-enoyl-[ACP] + H2O. Involved in unsaturated fatty acids biosynthesis. Catalyzes the dehydration of short chain beta-hydroxyacyl-ACPs and long chain saturated and unsaturated beta-hydroxyacyl-ACPs. In Clostridium tetani (strain Massachusetts / E88), this protein is 3-hydroxyacyl-[acyl-carrier-protein] dehydratase FabZ.